A 427-amino-acid polypeptide reads, in one-letter code: Serine--tRNA ligase (427 aa).

Thr236–Glu238 is a binding site for L-serine. An ATP-binding site is contributed by Arg267–Glu269. Residue Glu290 participates in L-serine binding. An ATP-binding site is contributed by Glu354 to Ser357. Ser390 is an L-serine binding site.

This sequence belongs to the class-II aminoacyl-tRNA synthetase family. Type-1 seryl-tRNA synthetase subfamily. Homodimer. The tRNA molecule binds across the dimer.

The protein localises to the cytoplasm. The enzyme catalyses tRNA(Ser) + L-serine + ATP = L-seryl-tRNA(Ser) + AMP + diphosphate + H(+). The catalysed reaction is tRNA(Sec) + L-serine + ATP = L-seryl-tRNA(Sec) + AMP + diphosphate + H(+). Its pathway is aminoacyl-tRNA biosynthesis; selenocysteinyl-tRNA(Sec) biosynthesis; L-seryl-tRNA(Sec) from L-serine and tRNA(Sec): step 1/1. Its function is as follows. Catalyzes the attachment of serine to tRNA(Ser). Is also able to aminoacylate tRNA(Sec) with serine, to form the misacylated tRNA L-seryl-tRNA(Sec), which will be further converted into selenocysteinyl-tRNA(Sec). The polypeptide is Serine--tRNA ligase (Rippkaea orientalis (strain PCC 8801 / RF-1) (Cyanothece sp. (strain PCC 8801))).